Reading from the N-terminus, the 386-residue chain is Decapping nuclease RAI1 (386 aa).

Position 34 (Arg34) interacts with substrate. Residue Glu159 participates in a divalent metal cation binding. Residue Glu205 coordinates substrate. Residues Asp207, Glu225, and Leu226 each contribute to the a divalent metal cation site. Residues Lys227 and Gln251 each coordinate substrate.

The protein belongs to the DXO/Dom3Z family. Interacts with RAT1; the interaction is direct, stabilizes RAT1 protein structure and stimulates its exoribonuclease activity. The interaction also stimulates RAI1 pyrophosphohydrolase activity, probably by recruiting it to mRNA substrates. A divalent metal cation serves as cofactor.

The protein localises to the nucleus. The catalysed reaction is a 5'-end NAD(+)-phospho-ribonucleoside in mRNA + H2O = a 5'-end phospho-ribonucleoside in mRNA + NAD(+) + H(+). The enzyme catalyses a 5'-end (N(7)-methyl 5'-triphosphoguanosine)-ribonucleoside-ribonucleotide in mRNA + H2O = a (N(7)-methyl 5'-triphosphoguanosine)-nucleoside + a 5'-end phospho-ribonucleoside in mRNA + H(+). It carries out the reaction a 5'-end triphospho-ribonucleoside in mRNA + H2O = a 5'-end phospho-ribonucleoside in mRNA + diphosphate + H(+). Its function is as follows. Decapping enzyme for NAD-capped RNAs: specifically hydrolyzes the nicotinamide adenine dinucleotide (NAD) cap from a subset of RNAs by removing the entire NAD moiety from the 5'-end of an NAD-capped RNA. The NAD-cap is present at the 5'-end of some RNAs and snoRNAs. In contrast to the canonical 5'-end N7 methylguanosine (m7G) cap, the NAD cap promotes mRNA decay. Also acts as a non-canonical decapping enzyme that removes the entire cap structure of m7G capped or incompletely capped RNAs. Has decapping activity toward incomplete 5'-end m7G cap mRNAs such as unmethylated 5'-end-capped RNA (cap0), while it has no activity toward 2'-O-ribose methylated m7G cap (cap1). Also possesses RNA 5'-pyrophosphohydrolase activity by hydrolyzing the 5'-end triphosphate to release pyrophosphates. Stimulates exoribonuclease activity of Rat1, allowing it to degrade RNAs with stable secondary structure more effectively. This is Decapping nuclease RAI1 (RAI1) from Cryptococcus neoformans var. neoformans serotype D (strain B-3501A) (Filobasidiella neoformans).